We begin with the raw amino-acid sequence, 138 residues long: Large ribosomal subunit protein uL16 (138 aa).

It belongs to the universal ribosomal protein uL16 family. As to quaternary structure, part of the 50S ribosomal subunit.

Functionally, binds 23S rRNA and is also seen to make contacts with the A and possibly P site tRNAs. This chain is Large ribosomal subunit protein uL16, found in Paramagnetospirillum magneticum (strain ATCC 700264 / AMB-1) (Magnetospirillum magneticum).